Reading from the N-terminus, the 353-residue chain is Rhodopsin (353 aa).

At 1–36 (MNGTEGDNFYVPFSNKTGLARSPYEYPQYYLAEPWK) the chain is on the extracellular side. 2 N-linked (GlcNAc...) asparagine glycosylation sites follow: Asn2 and Asn15. Residues 37–61 (YSALAAYMFFLILVGFPVNFLTLFV) form a helical membrane-spanning segment. Topologically, residues 62 to 73 (TVQHKKLRTPLN) are cytoplasmic. The chain crosses the membrane as a helical span at residues 74–96 (YILLNLAMANLFMVLFGFTVTMY). Topologically, residues 97–110 (TSMNGYFVFGPTMC) are extracellular. Cys110 and Cys187 form a disulfide bridge. A helical membrane pass occupies residues 111–133 (SIEGFFATLGGEVALWSLVVLAI). The 'Ionic lock' involved in activated form stabilization motif lies at 134–136 (ERY). Over 134–152 (ERYIVICKPMGNFRFGNTH) the chain is Cytoplasmic. The chain crosses the membrane as a helical span at residues 153-173 (AIMGVAFTWIMALACAAPPLV). Over 174–202 (GWSRYIPEGMQCSCGPDYYTLNPNFNNES) the chain is Extracellular. A helical transmembrane segment spans residues 203-224 (YVVYMFVVHFLVPFVIIFFCYG). The Cytoplasmic segment spans residues 225–252 (RLLCTVKEAAAAQQESASTQKAEKEVTR). Residues 253-274 (MVVLMVIGFLVCWVPYASVAFY) traverse the membrane as a helical segment. At 275–286 (IFTHQGSDFGAT) the chain is on the extracellular side. Residues 287 to 308 (FMTLPAFFAKSSALYNPVIYIL) traverse the membrane as a helical segment. N6-(retinylidene)lysine is present on Lys296. At 309-353 (MNKQFRNCMITTLCCGKNPLGDDESGASTSKTEVSSVSTSPVSPA) the chain is on the cytoplasmic side. Positions 330-353 (DDESGASTSKTEVSSVSTSPVSPA) are disordered. Residues 336–353 (STSKTEVSSVSTSPVSPA) are compositionally biased toward low complexity.

It belongs to the G-protein coupled receptor 1 family. Opsin subfamily. In terms of processing, phosphorylated on some or all of the serine and threonine residues present in the C-terminal region. Contains one covalently linked retinal chromophore. In terms of tissue distribution, short photoreceptor cells.

The protein resides in the membrane. The protein localises to the cell projection. Its subcellular location is the cilium. It is found in the photoreceptor outer segment. In terms of biological role, photoreceptor required for image-forming vision at low light intensity. While most salt water fish species use retinal as chromophore, most freshwater fish use 3-dehydroretinal, or a mixture of retinal and 3-dehydroretinal. Light-induced isomerization of 11-cis to all-trans retinal triggers a conformational change that activates signaling via G-proteins. Subsequent receptor phosphorylation mediates displacement of the bound G-protein alpha subunit by arrestin and terminates signaling. In Lethenteron camtschaticum (Japanese lamprey), this protein is Rhodopsin (RHO).